Consider the following 122-residue polypeptide: Large ribosomal subunit protein uL14 (122 aa).

Belongs to the universal ribosomal protein uL14 family. In terms of assembly, part of the 50S ribosomal subunit. Forms a cluster with proteins L3 and L19. In the 70S ribosome, L14 and L19 interact and together make contacts with the 16S rRNA in bridges B5 and B8.

Functionally, binds to 23S rRNA. Forms part of two intersubunit bridges in the 70S ribosome. The sequence is that of Large ribosomal subunit protein uL14 from Janthinobacterium sp. (strain Marseille) (Minibacterium massiliensis).